A 335-amino-acid polypeptide reads, in one-letter code: tRNA pseudouridine synthase D (335 aa).

D77 acts as the Nucleophile in catalysis. Residues 152-308 (GFPNYFTEQR…AQNLNWQFEP (157 aa)) enclose the TRUD domain.

This sequence belongs to the pseudouridine synthase TruD family.

It catalyses the reaction uridine(13) in tRNA = pseudouridine(13) in tRNA. Responsible for synthesis of pseudouridine from uracil-13 in transfer RNAs. In Actinobacillus succinogenes (strain ATCC 55618 / DSM 22257 / CCUG 43843 / 130Z), this protein is tRNA pseudouridine synthase D.